Reading from the N-terminus, the 728-residue chain is E3 ubiquitin-protein ligase TRIM36 (728 aa).

The segment at 33–84 (CPACKELFTHPLILPCQHSICHKCVKELLLTLDDSFNDVGSDNSNQSSPRLR) adopts an RING-type; degenerate zinc-finger fold. B box-type zinc fingers lie at residues 154–192 (AIMCDLCKPPPQESTKSCMDCSASYCNECFKIHHPWGTI) and 207–249 (PKIL…VTTM). Zn(2+)-binding residues include Cys-212, His-215, Cys-235, and His-241. The stretch at 271–345 (ESQVKSQISE…MEEYQGLLEN (75 aa)) forms a coiled coil. One can recognise a COS domain in the interval 356–413 (LKETDQSCFVQTAKQLHLRIQKATESLKSFRPAAQTSFEDYVVNTSKQTELLGELSFF). The Fibronectin type-III domain maps to 419–510 (VPEINEEQSK…RELILHTPPA (92 aa)). A B30.2/SPRY domain is found at 508-720 (PPAPVFSFLF…IQLEEPITAK (213 aa)).

It belongs to the TRIM/RBCC family. In terms of assembly, interacts with CENPH. Highly expressed in testis, prostate and brain. Weakly expressed in kidney, lung and heart. Expressed in fetal tissues.

The protein localises to the cytoplasm. It localises to the cytoplasmic vesicle. Its subcellular location is the secretory vesicle. It is found in the acrosome. The protein resides in the cytoskeleton. It carries out the reaction S-ubiquitinyl-[E2 ubiquitin-conjugating enzyme]-L-cysteine + [acceptor protein]-L-lysine = [E2 ubiquitin-conjugating enzyme]-L-cysteine + N(6)-ubiquitinyl-[acceptor protein]-L-lysine.. Functionally, E3 ubiquitin-protein ligase which mediates ubiquitination and subsequent proteasomal degradation of target proteins. Involved in chromosome segregation and cell cycle regulation. May play a role in the acrosome reaction and fertilization. The protein is E3 ubiquitin-protein ligase TRIM36 (TRIM36) of Homo sapiens (Human).